A 400-amino-acid chain; its full sequence is WD repeat and FYVE domain-containing protein 2 (400 aa).

6 WD repeats span residues 22–61 (GSQEVVNMAVIVPKEEGVISVSEDRTVRVWLKRDSGQYWP), 66–105 (AMPSPCSCMSFNPETRRLSIGLDNGTISEFILSEDYNKMT), 112–150 (AHQSRVTMILFVLELEWVLSTGQDKQFAWHCSESGQRLG), 153–192 (RTSAVASGLQFDVETRHVFIGDHSGQVTILKLEQENCTLV), 197–236 (GHTGGVTALCWDPVQRVLFSGSSDHSVIMWDIGGRKGTAI), and 240–279 (GHNDRVQALSYAQHTRQLISCGGDGGIVVWNMDVERQETP). The FYVE-type zinc-finger motif lies at 281–352 (WLDSDSCQKC…VCDSCHEAIT (72 aa)). Residues Cys-287, Cys-290, Cys-314, Cys-317, Cys-322, Cys-325, Cys-344, and Cys-347 each contribute to the Zn(2+) site. Residues 364 to 399 (DSKHNIVHVHFDATRGWLLTSGTDKVIKLWDMTPVV) form a WD 7 repeat.

Homodimer. Interacts (via WD repeats 1-3) with AKT1, AKT2, PRKCZ and PRKCI. Interacts with VAMP2. Forms a complex with VAMP2 and PRKCZ. Interacts with FOXO1. Forms a complex with AKT1 and FOXO1.

It is found in the endosome. It localises to the early endosome. The protein localises to the cytoplasm. Its function is as follows. Acts in an adapter protein-like fashion to mediate the interaction between the kinase PRKCZ and its substrate VAMP2 and increases the PRKCZ-dependent phosphorylation of VAMP2. Positively regulates adipocyte differentiation, by facilitating the phosphorylation and thus inactivation of the anti-adipogenetic transcription factor FOXO1 by the kinase AKT1. Plays a role in endosomal control of AKT2 signaling; required for insulin-stimulated AKT2 phosphorylation and glucose uptake and insulin-stimulated phosphorylation of AKT2 substrates. Participates in transferrin receptor endocytosis. This is WD repeat and FYVE domain-containing protein 2 (WDFY2) from Homo sapiens (Human).